The primary structure comprises 439 residues: 26S proteasome regulatory subunit 4 homolog (439 aa).

The tract at residues 1 to 46 (MGNNQSQGQGDKGEKKDQPKYQPPPPPTQFGKKKKRRGAETSTKLP) is disordered. 225-232 (GEPGTGKT) lines the ATP pocket.

This sequence belongs to the AAA ATPase family.

Its subcellular location is the cytoplasm. The protein resides in the nucleus. The 26S proteasome is involved in the ATP-dependent degradation of ubiquitinated proteins. The regulatory (or ATPase) complex confers ATP dependency and substrate specificity to the 26S complex. Plays an important role in regulating both growth and multicellular development. The polypeptide is 26S proteasome regulatory subunit 4 homolog (psmC1) (Dictyostelium discoideum (Social amoeba)).